Reading from the N-terminus, the 351-residue chain is Phosphoribosylformylglycinamidine cyclo-ligase (351 aa).

The protein belongs to the AIR synthase family.

Its subcellular location is the cytoplasm. It carries out the reaction 2-formamido-N(1)-(5-O-phospho-beta-D-ribosyl)acetamidine + ATP = 5-amino-1-(5-phospho-beta-D-ribosyl)imidazole + ADP + phosphate + H(+). It functions in the pathway purine metabolism; IMP biosynthesis via de novo pathway; 5-amino-1-(5-phospho-D-ribosyl)imidazole from N(2)-formyl-N(1)-(5-phospho-D-ribosyl)glycinamide: step 2/2. The protein is Phosphoribosylformylglycinamidine cyclo-ligase of Azotobacter vinelandii (strain DJ / ATCC BAA-1303).